Reading from the N-terminus, the 381-residue chain is Protein-glutamate methylesterase/protein-glutamine glutaminase (381 aa).

A Response regulatory domain is found at 8-125 (QVLCIDDSAL…RDGMNEYADQ (118 aa)). Asp-59 is modified (4-aspartylphosphate). In terms of domain architecture, CheB-type methylesterase spans 183 to 375 (FSSTEKLIIV…PHVLARLSAH (193 aa)). Residues Ser-195, His-221, and Asp-317 contribute to the active site.

Belongs to the CheB family. Post-translationally, phosphorylated by CheA. Phosphorylation of the N-terminal regulatory domain activates the methylesterase activity.

The protein resides in the cytoplasm. It carries out the reaction [protein]-L-glutamate 5-O-methyl ester + H2O = L-glutamyl-[protein] + methanol + H(+). The enzyme catalyses L-glutaminyl-[protein] + H2O = L-glutamyl-[protein] + NH4(+). Involved in chemotaxis. Part of a chemotaxis signal transduction system that modulates chemotaxis in response to various stimuli. Catalyzes the demethylation of specific methylglutamate residues introduced into the chemoreceptors (methyl-accepting chemotaxis proteins or MCP) by CheR. Also mediates the irreversible deamidation of specific glutamine residues to glutamic acid. The protein is Protein-glutamate methylesterase/protein-glutamine glutaminase of Ralstonia nicotianae (strain ATCC BAA-1114 / GMI1000) (Ralstonia solanacearum).